The sequence spans 172 residues: Adenine phosphoribosyltransferase (172 aa).

It belongs to the purine/pyrimidine phosphoribosyltransferase family. Homodimer.

The protein resides in the cytoplasm. It carries out the reaction AMP + diphosphate = 5-phospho-alpha-D-ribose 1-diphosphate + adenine. It functions in the pathway purine metabolism; AMP biosynthesis via salvage pathway; AMP from adenine: step 1/1. In terms of biological role, catalyzes a salvage reaction resulting in the formation of AMP, that is energically less costly than de novo synthesis. The sequence is that of Adenine phosphoribosyltransferase from Pediococcus pentosaceus (strain ATCC 25745 / CCUG 21536 / LMG 10740 / 183-1w).